Here is a 125-residue protein sequence, read N- to C-terminus: MKKSGVLFLLGIILLVLIGVQGTPVVRKGRCSCISTNQGTIHLQSLKDLKQFAPSPSCEKIEIIATLKNGVQTCLNPDSADVKELIKKWEKQVSQKKKQKNGKKHQKKKVLKVRKSQRSRQKKTT.

Positions 1–22 (MKKSGVLFLLGIILLVLIGVQG) are cleaved as a signal peptide. Intrachain disulfides connect Cys-31/Cys-58 and Cys-33/Cys-74. A disordered region spans residues 93–125 (VSQKKKQKNGKKHQKKKVLKVRKSQRSRQKKTT). The segment covering 94 to 125 (SQKKKQKNGKKHQKKKVLKVRKSQRSRQKKTT) has biased composition (basic residues).

Belongs to the intercrine alpha (chemokine CxC) family.

The protein resides in the secreted. Functionally, cytokine that affects the growth, movement, or activation state of cells that participate in immune and inflammatory response. Chemotactic for activated T-cells. Binds to CXCR3. The protein is C-X-C motif chemokine 9 (CXCL9) of Homo sapiens (Human).